The primary structure comprises 955 residues: MPLIMEDGINVDDLFGEPGSLELGLSPSTPSPRGLAQRLDEMRLIGCCQKIAWSKLGCIAYISQDGLRVNVRHLQCRPSDGKWVLSEETPLLPVTDAHGGHTLVHLCWNEPGAELAVADSSGRVSIYSISIALNSIAGHRQAAFDPDDDGAQIVGMMWLNTQRTVHSFYQAAKVQGRWAYSPFRRRPIGPFHPVNKAGLVCVTRSGIIRLLYQNPDSRWAEISAELKNTGYSDRLLTHAALVSTQGGILVATHSACQKICLYRVHIAWTPTQYDPGQQKPPAPWPVPSFRFLHCKVESQCDVPGTNRNAGDNAQGLPSFTNSFYCLTGLDIVLPALDNPAGSTANPWVVAIYSAPLHVTQDHPQQQGPASVIVRWQLDTGPLTLHPKFDDVPSKKNNAQVKPKLELRRLDDVYSDKYAISIDQIEYGNVLAITYDDGSVVFYDPKTMAVFNGVDDANTVTSLAQAGFHHPPEPSGLHISFSPNACAAVMLDGEGQTHLRLTEHSYGAEGGLHDENKYSAAIAALTLAFCRGCGSDVNTDDILLILVRQLTPEAQATFINEAYRALPINCNFTVEQDKLMNHPYIPRCLSIQAALGFKNKYTPRSFASSIPWAVLQLRHASVLYAFFFQYNKGGATEPHDPDVLRMVLGNTKWALDFSFYVLNELFDLADDFESLSGDQEAFTQKLKSTSSLPLIILLSSMSRAFLRFICRGLRGIYAGYATAAPLSGDARVYYAEIYQTLESAPIRIDAYEKFLAGVDSAVRHAYHGAGFGDAERPGPEKELLVNARVPPVLVPAVSTILRQTVPALKTEIDRITIYMGDYSWLGLSNDRRTEMYRRNRDVDIIKKIPCRPAASALPETNANANANQNGKSSTQVQQRRRRCVRCCEVSSDTHPPRSLLSFRMIAKLGLLRACVCGGMWTLEPSVYSSAQSSGAPVGQATGRTPALMAAGLAGSS.

Belongs to the Mediator complex subunit 16 family. As to quaternary structure, component of the Mediator complex.

It is found in the nucleus. Functionally, component of the Mediator complex, a coactivator involved in the regulated transcription of nearly all RNA polymerase II-dependent genes. Mediator functions as a bridge to convey information from gene-specific regulatory proteins to the basal RNA polymerase II transcription machinery. Mediator is recruited to promoters by direct interactions with regulatory proteins and serves as a scaffold for the assembly of a functional preinitiation complex with RNA polymerase II and the general transcription factors. The polypeptide is Mediator of RNA polymerase II transcription subunit 16 (sin4) (Neosartorya fischeri (strain ATCC 1020 / DSM 3700 / CBS 544.65 / FGSC A1164 / JCM 1740 / NRRL 181 / WB 181) (Aspergillus fischerianus)).